A 649-amino-acid polypeptide reads, in one-letter code: Acetyl-coenzyme A synthetase (649 aa).

Residues 191 to 194, threonine 311, and asparagine 335 each bind CoA; that span reads RGGR. ATP-binding positions include 387 to 389, 411 to 416, aspartate 500, and arginine 515; these read GEP and DTWWQT. Residue serine 523 coordinates CoA. Position 526 (arginine 526) interacts with ATP. Mg(2+)-binding residues include valine 537, phenylalanine 539, and isoleucine 542. Arginine 584 contributes to the CoA binding site. Lysine 609 is modified (N6-acetyllysine).

It belongs to the ATP-dependent AMP-binding enzyme family. The cofactor is Mg(2+). Post-translationally, acetylated. Deacetylation by the SIR2-homolog deacetylase activates the enzyme.

The enzyme catalyses acetate + ATP + CoA = acetyl-CoA + AMP + diphosphate. In terms of biological role, catalyzes the conversion of acetate into acetyl-CoA (AcCoA), an essential intermediate at the junction of anabolic and catabolic pathways. AcsA undergoes a two-step reaction. In the first half reaction, AcsA combines acetate with ATP to form acetyl-adenylate (AcAMP) intermediate. In the second half reaction, it can then transfer the acetyl group from AcAMP to the sulfhydryl group of CoA, forming the product AcCoA. In Vibrio cholerae serotype O1 (strain ATCC 39315 / El Tor Inaba N16961), this protein is Acetyl-coenzyme A synthetase.